We begin with the raw amino-acid sequence, 220 residues long: Catechol O-methyltransferase (220 aa).

S-adenosyl-L-methionine contacts are provided by residues V44, E66, 68-69, S74, E92, and A121; that span reads GT. Position 139 (D139) interacts with a divalent metal cation. D141 is a binding site for S-adenosyl-L-methionine. A divalent metal cation contacts are provided by D165 and N166.

It belongs to the class I-like SAM-binding methyltransferase superfamily. Cation-dependent O-methyltransferase family. Homodimer. A divalent metal cation is required as a cofactor.

It carries out the reaction a catechol + S-adenosyl-L-methionine = a guaiacol + S-adenosyl-L-homocysteine + H(+). With respect to regulation, inhibited by EDTA. In terms of biological role, catechol O-methyltransferase that can use various catechol-like compounds such as gallic acid (GA), 3,4-dihydroxy-5-methoxy-benzoic acid (5OMeBA), protocatechuic acid (PCA), 3,4-dihydroxy-benzaldehyde (DHA), dopamine, caffeic acid (CA), luteolin, quercetin, and 5-hydroxyuridine. In Mycobacterium tuberculosis (strain ATCC 25618 / H37Rv), this protein is Catechol O-methyltransferase.